The primary structure comprises 325 residues: Tetraacyldisaccharide 4'-kinase (325 aa).

ATP is bound at residue 55-62 (TAGGNGKT).

Belongs to the LpxK family.

It carries out the reaction a lipid A disaccharide + ATP = a lipid IVA + ADP + H(+). Its pathway is glycolipid biosynthesis; lipid IV(A) biosynthesis; lipid IV(A) from (3R)-3-hydroxytetradecanoyl-[acyl-carrier-protein] and UDP-N-acetyl-alpha-D-glucosamine: step 6/6. Transfers the gamma-phosphate of ATP to the 4'-position of a tetraacyldisaccharide 1-phosphate intermediate (termed DS-1-P) to form tetraacyldisaccharide 1,4'-bis-phosphate (lipid IVA). This is Tetraacyldisaccharide 4'-kinase from Salmonella typhi.